The following is a 68-amino-acid chain: Metallothionein (68 aa).

This sequence belongs to the metallothionein superfamily. Type 4 family.

Functionally, metallothioneins have a high content of cysteine residues that bind various heavy metals. This Lytechinus pictus (Painted sea urchin) protein is Metallothionein (MT1).